Here is a 150-residue protein sequence, read N- to C-terminus: 3-dehydroquinate dehydratase (150 aa).

The active-site Proton acceptor is Tyr26. Residues Asn77, His83, and Asp90 each coordinate substrate. His103 (proton donor) is an active-site residue. Substrate is bound by residues Leu104–Ser105 and Arg114.

Belongs to the type-II 3-dehydroquinase family. As to quaternary structure, homododecamer.

The catalysed reaction is 3-dehydroquinate = 3-dehydroshikimate + H2O. The protein operates within metabolic intermediate biosynthesis; chorismate biosynthesis; chorismate from D-erythrose 4-phosphate and phosphoenolpyruvate: step 3/7. Catalyzes a trans-dehydration via an enolate intermediate. This chain is 3-dehydroquinate dehydratase, found in Yersinia pseudotuberculosis serotype O:1b (strain IP 31758).